A 180-amino-acid chain; its full sequence is Large ribosomal subunit protein uL5 (180 aa).

The protein belongs to the universal ribosomal protein uL5 family. In terms of assembly, part of the 50S ribosomal subunit; part of the 5S rRNA/L5/L18/L25 subcomplex. Contacts the 5S rRNA and the P site tRNA. Forms a bridge to the 30S subunit in the 70S ribosome.

In terms of biological role, this is one of the proteins that bind and probably mediate the attachment of the 5S RNA into the large ribosomal subunit, where it forms part of the central protuberance. In the 70S ribosome it contacts protein S13 of the 30S subunit (bridge B1b), connecting the 2 subunits; this bridge is implicated in subunit movement. Contacts the P site tRNA; the 5S rRNA and some of its associated proteins might help stabilize positioning of ribosome-bound tRNAs. This is Large ribosomal subunit protein uL5 from Streptococcus thermophilus (strain CNRZ 1066).